Reading from the N-terminus, the 306-residue chain is Ornithine carbamoyltransferase 1, anabolic (306 aa).

Residues 53-56, glutamine 80, arginine 104, and 131-134 each bind carbamoyl phosphate; these read STRT and HPCQ. L-ornithine contacts are provided by residues asparagine 162, aspartate 219, and 223–224; that span reads SM. Residues 259-260 and arginine 287 each bind carbamoyl phosphate; that span reads CL.

It belongs to the aspartate/ornithine carbamoyltransferase superfamily. OTCase family. As to quaternary structure, homotrimer.

The protein resides in the cytoplasm. The enzyme catalyses carbamoyl phosphate + L-ornithine = L-citrulline + phosphate + H(+). Its pathway is amino-acid biosynthesis; L-arginine biosynthesis; L-arginine from L-ornithine and carbamoyl phosphate: step 1/3. With respect to regulation, reversibly inhibited by inhibited by phaseolotoxin and octicidine. Reversibly catalyzes the transfer of the carbamoyl group from carbamoyl phosphate (CP) to the N(epsilon) atom of ornithine (ORN) to produce L-citrulline, which is a substrate for argininosuccinate synthetase, the enzyme involved in the final step in arginine biosynthesis. The sequence is that of Ornithine carbamoyltransferase 1, anabolic from Pseudomonas savastanoi pv. phaseolicola (Pseudomonas syringae pv. phaseolicola).